The chain runs to 636 residues: Poly(3-hydroxyalkanoate) polymerase subunit PhaC (636 aa).

Disordered stretches follow at residues 1-38 and 129-152; these read MYNK…DATD and QGTR…KRFS. Residues 143-152 show a composition bias toward basic and acidic residues; sequence PDTRKDKRFS. Cys-373 is a catalytic residue.

It belongs to the PHA/PHB synthase family. Type I PhaC subfamily.

Its subcellular location is the cytoplasm. The enzyme catalyses (3R)-3-hydroxybutanoyl-CoA + [(3R)-hydroxybutanoate](n) = [(3R)-hydroxybutanoate](n+1) + CoA. It functions in the pathway biopolymer metabolism; poly-(R)-3-hydroxybutanoate biosynthesis. In terms of biological role, polymerizes D(-)-3-hydroxybutyryl-CoA to create PHB which consists of thousands of hydroxybutyrate molecules linked end to end. PHB serves as an intracellular energy reserve material when cells grow under conditions of nutrient limitation. The chain is Poly(3-hydroxyalkanoate) polymerase subunit PhaC from Rhizobium etli (strain ATCC 51251 / DSM 11541 / JCM 21823 / NBRC 15573 / CFN 42).